A 319-amino-acid polypeptide reads, in one-letter code: Acetyl-coenzyme A carboxylase carboxyl transferase subunit alpha (319 aa).

The CoA carboxyltransferase C-terminal domain occupies 35–296 (DLEKEIKQLE…KQRLLEQLKE (262 aa)).

The protein belongs to the AccA family. As to quaternary structure, acetyl-CoA carboxylase is a heterohexamer composed of biotin carboxyl carrier protein (AccB), biotin carboxylase (AccC) and two subunits each of ACCase subunit alpha (AccA) and ACCase subunit beta (AccD).

Its subcellular location is the cytoplasm. It carries out the reaction N(6)-carboxybiotinyl-L-lysyl-[protein] + acetyl-CoA = N(6)-biotinyl-L-lysyl-[protein] + malonyl-CoA. It functions in the pathway lipid metabolism; malonyl-CoA biosynthesis; malonyl-CoA from acetyl-CoA: step 1/1. Its function is as follows. Component of the acetyl coenzyme A carboxylase (ACC) complex. First, biotin carboxylase catalyzes the carboxylation of biotin on its carrier protein (BCCP) and then the CO(2) group is transferred by the carboxyltransferase to acetyl-CoA to form malonyl-CoA. In Aliivibrio fischeri (strain ATCC 700601 / ES114) (Vibrio fischeri), this protein is Acetyl-coenzyme A carboxylase carboxyl transferase subunit alpha.